Reading from the N-terminus, the 1002-residue chain is Leucine-rich repeat receptor-like serine/threonine-protein kinase BAM2 (1002 aa).

An N-terminal signal peptide occupies residues 1-22 (MKLLLLLLLLLLLHISHSFTVA). The Extracellular portion of the chain corresponds to 23 to 636 (KPITELHALL…SHVKPLSATT (614 aa)). N51, N80, N97, N123, N130, N153, and N164 each carry an N-linked (GlcNAc...) asparagine glycan. LRR repeat units follow at residues 68–92 (LRHV…VAHL), 93–116 (PLLQ…ISNL), 118–140 (ELRH…LSSG), 141–165 (LVNL…LTNL), 167–188 (QLRH…TYGT), 189–213 (WPVL…IGNL), 215–238 (TLRE…IGNL), 239–262 (SELV…IGKL), 263–285 (QKLD…ELGL), 286–309 (ISSL…SFSQ), 311–334 (KNLT…IGEM), 335–358 (PELE…LGEN), 359–382 (GRLV…MCSG), 384–406 (RLMT…LGKC), 407–430 (ESLT…LFGL), 431–456 (PKLS…GVSG), 458–479 (LGQI…IGNL), 480–503 (SGVQ…IGRL), 505–527 (QLSK…ISRC), 528–551 (KLLT…LTGM), 552–575 (KILN…IASM), and 577–600 (SLTS…QFSY). Residues N212 and N237 are each glycosylated (N-linked (GlcNAc...) asparagine). N312 and N346 each carry an N-linked (GlcNAc...) asparagine glycan. N-linked (GlcNAc...) asparagine glycosylation is present at N420. A glycan (N-linked (GlcNAc...) asparagine) is linked at N478. 3 N-linked (GlcNAc...) asparagine glycosylation sites follow: N558, N587, and N602. Residues 637 to 657 (KLLLVLGLLFCSMVFAIVAII) traverse the membrane as a helical segment. Over 658–1002 (KARSLRNASE…SGSPPDLLSN (345 aa)) the chain is Cytoplasmic. Phosphothreonine is present on T682. Positions 690 to 967 (LKEDNIIGKG…VQILTEIPKI (278 aa)) constitute a Protein kinase domain. ATP contacts are provided by residues 696–704 (IGKGGAGIV) and K718. Y765 and Y803 each carry phosphotyrosine. D816 functions as the Proton acceptor in the catalytic mechanism. Phosphoserine is present on S851. Residues Y859 and Y866 each carry the phosphotyrosine modification. T867 carries the post-translational modification Phosphothreonine. Residues 969 to 1002 (LSKQQAAESDVTEKAPAINESSPDSGSPPDLLSN) are disordered. Low complexity predominate over residues 989–1002 (SSPDSGSPPDLLSN).

It belongs to the protein kinase superfamily. Ser/Thr protein kinase family. In terms of assembly, interacts with BAM1 and CLV1. Binds to the CLV3, CLE11, CLE18, CLE19, CLE22, CLE25, CLE26, CLE40, CLE41 and CLE42 mature peptides, probably via its extracellular leucine-rich repeat region. In terms of tissue distribution, expressed in seedlings, roots, rosette leaves, stems, inflorescences, flowers and siliques.

It is found in the cell membrane. It catalyses the reaction L-seryl-[protein] + ATP = O-phospho-L-seryl-[protein] + ADP + H(+). It carries out the reaction L-threonyl-[protein] + ATP = O-phospho-L-threonyl-[protein] + ADP + H(+). In terms of biological role, necessary for male gametophyte development, as well as ovule specification and function. Involved in cell-cell communication process required during early anther development, and regulating cell division and differentiation to organize cell layers. Required for the development of high-ordered vascular strands within the leaf and a correlated control of leaf shape, size and symmetry. May regulate the CLV1-dependent CLV3-mediated signaling in meristems maintenance. The polypeptide is Leucine-rich repeat receptor-like serine/threonine-protein kinase BAM2 (BAM2) (Arabidopsis thaliana (Mouse-ear cress)).